We begin with the raw amino-acid sequence, 148 residues long: Large ribosomal subunit protein uL15 (148 aa).

A disordered region spans residues 1 to 57 (MRLNDVKPQKGSKKRRRRVGRGISAGQGASAGLGMRGQKSRSGSGTRPGFEGGQQPL). Residues 10 to 20 (KGSKKRRRRVG) are compositionally biased toward basic residues. Over residues 23 to 35 (ISAGQGASAGLGM) the composition is skewed to gly residues.

The protein belongs to the universal ribosomal protein uL15 family. As to quaternary structure, part of the 50S ribosomal subunit.

Its function is as follows. Binds to the 23S rRNA. This is Large ribosomal subunit protein uL15 from Trichormus variabilis (strain ATCC 29413 / PCC 7937) (Anabaena variabilis).